An 80-amino-acid polypeptide reads, in one-letter code: Putative defensin-like protein 15 (80 aa).

The first 29 residues, 1 to 29 (MAKFASIITFIYAALVLFAAFEVPTMVEA), serve as a signal peptide directing secretion. Pyrrolidone carboxylic acid is present on Gln-30. Cystine bridges form between Cys-33–Cys-80, Cys-44–Cys-65, Cys-50–Cys-74, and Cys-54–Cys-76.

It belongs to the DEFL family.

Its subcellular location is the secreted. Its function is as follows. Confers broad-spectrum resistance to pathogens. The protein is Putative defensin-like protein 15 (PDF1.2B) of Arabidopsis thaliana (Mouse-ear cress).